The following is a 204-amino-acid chain: MARIEAPQDALGRLIEALRVLPGVGPKSAQRMAFYLLQHDRNGAAVLAQSLGEAVETVGHCACCNTFSETQVCSTCSDERRDPSLLCIVETPADQVMVEQTLSFKGNYFVLMGRLSPLDGMGPNEISFDRLLNRIETPDTGVPIREVVLATNFTSEGEATAHYIGEVLKPKGIKVTRIARGIPVGGELEYVDAGTLARALMDRR.

A C4-type zinc finger spans residues 61-76 (CACCNTFSETQVCSTC). Positions 84–183 (SLLCIVETPA…KVTRIARGIP (100 aa)) constitute a Toprim domain.

It belongs to the RecR family.

Functionally, may play a role in DNA repair. It seems to be involved in an RecBC-independent recombinational process of DNA repair. It may act with RecF and RecO. This Polynucleobacter necessarius subsp. necessarius (strain STIR1) protein is Recombination protein RecR.